The primary structure comprises 552 residues: Phosphoglucomutase (552 aa).

Serine 143 serves as the catalytic Phosphoserine intermediate. Mg(2+)-binding residues include serine 143, aspartate 295, aspartate 297, and aspartate 299.

It belongs to the phosphohexose mutase family. It depends on Mg(2+) as a cofactor.

The catalysed reaction is alpha-D-glucose 1-phosphate = alpha-D-glucose 6-phosphate. The protein operates within glycolipid metabolism; diglucosyl-diacylglycerol biosynthesis. Catalyzes the interconversion between glucose-6-phosphate and alpha-glucose-1-phosphate. This is the first step in the biosynthesis of diglucosyl-diacylglycerol (Glc2-DAG), i.e. the predominant glycolipid found in the S.aureus membrane, which is also used as a membrane anchor for lipoteichoic acid (LTA). The chain is Phosphoglucomutase (pgcA) from Staphylococcus aureus (strain bovine RF122 / ET3-1).